Reading from the N-terminus, the 211-residue chain is ATP phosphoribosyltransferase (211 aa).

Belongs to the ATP phosphoribosyltransferase family. Short subfamily. As to quaternary structure, heteromultimer composed of HisG and HisZ subunits.

The protein localises to the cytoplasm. It carries out the reaction 1-(5-phospho-beta-D-ribosyl)-ATP + diphosphate = 5-phospho-alpha-D-ribose 1-diphosphate + ATP. It functions in the pathway amino-acid biosynthesis; L-histidine biosynthesis; L-histidine from 5-phospho-alpha-D-ribose 1-diphosphate: step 1/9. Functionally, catalyzes the condensation of ATP and 5-phosphoribose 1-diphosphate to form N'-(5'-phosphoribosyl)-ATP (PR-ATP). Has a crucial role in the pathway because the rate of histidine biosynthesis seems to be controlled primarily by regulation of HisG enzymatic activity. The chain is ATP phosphoribosyltransferase from Lacticaseibacillus casei (strain BL23) (Lactobacillus casei).